The primary structure comprises 147 residues: MGEVKGKWTPKLERFVDEYFINGMNATKAAIAAGYSKKSASTIAAENMQKPHVRARIEERLAQMDKKRIMQAEEVLEHLTRIALGQEKEQVLMGIGKGAETKTHVEVSAKDRIKALELLGKAHAVFTDKQKVETNQVIIVDDSGDAE.

The segment at 25–50 is helix-turn-helix (HTH); it reads NATKAAIAAGYSKKSASTIAAENMQK.

It belongs to the SPP1-like small terminase family. As to quaternary structure, homodecamer. Interacts with the terminase large subunit gp2; the active complex is probably composed of a one monomer of gp2 and two or more decamers of gp1.

In terms of biological role, the terminase small subunit specifically recognizes the non-adjacent pacL and pacR packaging subsites and regulates the ATPase activity of the terminase large subunit. The terminase lies at a unique vertex of the procapsid and is composed of two subunits, a small terminase subunit involved in viral DNA recognition (packaging 'pac' sequence), and a large terminase subunit possessing endonucleolytic and ATPase activities. Both terminase subunits heterooligomerize and are docked on the portal protein to form the packaging machine. The terminase large subunit exhibits endonuclease activity and cleaves the viral genome concatemer once the capsid is full (headful packaging). Once the capsid is packaged with the DNA, the terminase complex is substituted by neck proteins. The sequence is that of Terminase small subunit (1) from Bacillus subtilis (Bacteriophage SPP1).